We begin with the raw amino-acid sequence, 255 residues long: 5-oxoprolinase subunit A (255 aa).

The protein belongs to the LamB/PxpA family. As to quaternary structure, forms a complex composed of PxpA, PxpB and PxpC.

The enzyme catalyses 5-oxo-L-proline + ATP + 2 H2O = L-glutamate + ADP + phosphate + H(+). Functionally, catalyzes the cleavage of 5-oxoproline to form L-glutamate coupled to the hydrolysis of ATP to ADP and inorganic phosphate. In Clostridium beijerinckii (strain ATCC 51743 / NCIMB 8052) (Clostridium acetobutylicum), this protein is 5-oxoprolinase subunit A.